Reading from the N-terminus, the 433-residue chain is N-lysine methyltransferase SMYD2 (433 aa).

An SET domain is found at 7 to 241 (GGLERFCSPG…PGEEVFTSYI (235 aa)). 17 to 19 (KGR) is an S-adenosyl-L-methionine binding site. Positions 52, 55, 65, 68, 74, 78, 86, and 90 each coordinate Zn(2+). The MYND-type zinc-finger motif lies at 52-90 (CEFCFARKEGLSKCGRCKQAFYCNVECQREDWPMHKLEC). Residues His137, 206-207 (NH), and 258-260 (YFF) contribute to the S-adenosyl-L-methionine site.

Belongs to the class V-like SAM-binding methyltransferase superfamily. Interacts with RNA polymerase II and HELZ. Interacts with SIN3A and HDAC1. Interacts (via MYND-type zinc finger) with EPB41L3. Interacts (via SET domain) with p53/TP53. Interacts with RB1 and HSP90AA1.

The protein resides in the cytoplasm. It is found in the cytosol. It localises to the nucleus. It catalyses the reaction L-lysyl(4)-[histone H3] + 3 S-adenosyl-L-methionine = N(6),N(6),N(6)-trimethyl-L-lysyl(4)-[histone H3] + 3 S-adenosyl-L-homocysteine + 3 H(+). The enzyme catalyses L-lysyl-[protein] + S-adenosyl-L-methionine = N(6)-methyl-L-lysyl-[protein] + S-adenosyl-L-homocysteine + H(+). Functionally, protein-lysine N-methyltransferase that methylates both histones and non-histone proteins, including p53/TP53 and RB1. Specifically trimethylates histone H3 'Lys-4' (H3K4me3) in vivo. The activity requires interaction with HSP90alpha. Shows even higher methyltransferase activity on p53/TP53. Monomethylates 'Lys-370' of p53/TP53, leading to decreased DNA-binding activity and subsequent transcriptional regulation activity of p53/TP53. Monomethylates RB1 at 'Lys-860'. The chain is N-lysine methyltransferase SMYD2 (SMYD2) from Bos taurus (Bovine).